A 305-amino-acid chain; its full sequence is GTP cyclohydrolase FolE2 (305 aa).

Belongs to the GTP cyclohydrolase IV family.

The catalysed reaction is GTP + H2O = 7,8-dihydroneopterin 3'-triphosphate + formate + H(+). It participates in cofactor biosynthesis; 7,8-dihydroneopterin triphosphate biosynthesis; 7,8-dihydroneopterin triphosphate from GTP: step 1/1. Functionally, converts GTP to 7,8-dihydroneopterin triphosphate. In Xanthomonas euvesicatoria pv. vesicatoria (strain 85-10) (Xanthomonas campestris pv. vesicatoria), this protein is GTP cyclohydrolase FolE2.